The chain runs to 367 residues: Ferrochelatase (367 aa).

Residues His-213 and Glu-294 each contribute to the Fe cation site.

The protein belongs to the ferrochelatase family.

The protein localises to the cytoplasm. It carries out the reaction heme b + 2 H(+) = protoporphyrin IX + Fe(2+). It participates in porphyrin-containing compound metabolism; protoheme biosynthesis; protoheme from protoporphyrin-IX: step 1/1. Catalyzes the ferrous insertion into protoporphyrin IX. In Dechloromonas aromatica (strain RCB), this protein is Ferrochelatase.